The sequence spans 339 residues: Ketol-acid reductoisomerase (NADP(+)) (339 aa).

Positions 1–182 (MRVYYDRDAD…GGGRSGIIET (182 aa)) constitute a KARI N-terminal Rossmann domain. NADP(+) contacts are provided by residues 24–27 (YGSQ), lysine 48, serine 51, threonine 53, and 83–86 (DELQ). Residue histidine 108 is part of the active site. NADP(+) is bound at residue glycine 134. Residues 183 to 328 (NFKEECETDL…AKLRGMMPWI (146 aa)) enclose the KARI C-terminal knotted domain. Positions 191, 195, 227, and 231 each coordinate Mg(2+). Substrate is bound at residue serine 252.

This sequence belongs to the ketol-acid reductoisomerase family. The cofactor is Mg(2+).

It carries out the reaction (2R)-2,3-dihydroxy-3-methylbutanoate + NADP(+) = (2S)-2-acetolactate + NADPH + H(+). The catalysed reaction is (2R,3R)-2,3-dihydroxy-3-methylpentanoate + NADP(+) = (S)-2-ethyl-2-hydroxy-3-oxobutanoate + NADPH + H(+). Its pathway is amino-acid biosynthesis; L-isoleucine biosynthesis; L-isoleucine from 2-oxobutanoate: step 2/4. The protein operates within amino-acid biosynthesis; L-valine biosynthesis; L-valine from pyruvate: step 2/4. Functionally, involved in the biosynthesis of branched-chain amino acids (BCAA). Catalyzes an alkyl-migration followed by a ketol-acid reduction of (S)-2-acetolactate (S2AL) to yield (R)-2,3-dihydroxy-isovalerate. In the isomerase reaction, S2AL is rearranged via a Mg-dependent methyl migration to produce 3-hydroxy-3-methyl-2-ketobutyrate (HMKB). In the reductase reaction, this 2-ketoacid undergoes a metal-dependent reduction by NADPH to yield (R)-2,3-dihydroxy-isovalerate. This Agrobacterium fabrum (strain C58 / ATCC 33970) (Agrobacterium tumefaciens (strain C58)) protein is Ketol-acid reductoisomerase (NADP(+)).